The primary structure comprises 364 residues: Phospho-N-acetylmuramoyl-pentapeptide-transferase (364 aa).

Helical transmembrane passes span 18 to 38 (SLLI…AQIL), 48 to 68 (LFPL…VVPV), 91 to 111 (GTPT…ALIW), 114 to 134 (LDPA…IGWI), 154 to 174 (LILQ…TQSA), 183 to 203 (GQII…VLVA), 214 to 234 (VDGL…ALMA), 237 to 257 (NPGL…FIVH), 280 to 300 (AIGI…IFFV), and 343 to 363 (TQIV…AVIS).

It belongs to the glycosyltransferase 4 family. MraY subfamily. It depends on Mg(2+) as a cofactor.

It localises to the cell inner membrane. It catalyses the reaction UDP-N-acetyl-alpha-D-muramoyl-L-alanyl-gamma-D-glutamyl-meso-2,6-diaminopimeloyl-D-alanyl-D-alanine + di-trans,octa-cis-undecaprenyl phosphate = di-trans,octa-cis-undecaprenyl diphospho-N-acetyl-alpha-D-muramoyl-L-alanyl-D-glutamyl-meso-2,6-diaminopimeloyl-D-alanyl-D-alanine + UMP. Its pathway is cell wall biogenesis; peptidoglycan biosynthesis. Catalyzes the initial step of the lipid cycle reactions in the biosynthesis of the cell wall peptidoglycan: transfers peptidoglycan precursor phospho-MurNAc-pentapeptide from UDP-MurNAc-pentapeptide onto the lipid carrier undecaprenyl phosphate, yielding undecaprenyl-pyrophosphoryl-MurNAc-pentapeptide, known as lipid I. This is Phospho-N-acetylmuramoyl-pentapeptide-transferase from Rippkaea orientalis (strain PCC 8801 / RF-1) (Cyanothece sp. (strain PCC 8801)).